Reading from the N-terminus, the 442-residue chain is 3-phosphoshikimate 1-carboxyvinyltransferase (442 aa).

3-phosphoshikimate contacts are provided by Lys25, Ser26, and Arg30. Lys25 contacts phosphoenolpyruvate. Phosphoenolpyruvate is bound by residues Gly96 and Arg124. Residues Ser171, Ser172, Gln173, Ser203, Asp325, and Lys352 each contribute to the 3-phosphoshikimate site. Gln173 lines the phosphoenolpyruvate pocket. Asp325 acts as the Proton acceptor in catalysis. The phosphoenolpyruvate site is built by Arg356, Arg400, and Lys425.

This sequence belongs to the EPSP synthase family. In terms of assembly, monomer.

Its subcellular location is the cytoplasm. The enzyme catalyses 3-phosphoshikimate + phosphoenolpyruvate = 5-O-(1-carboxyvinyl)-3-phosphoshikimate + phosphate. It functions in the pathway metabolic intermediate biosynthesis; chorismate biosynthesis; chorismate from D-erythrose 4-phosphate and phosphoenolpyruvate: step 6/7. Catalyzes the transfer of the enolpyruvyl moiety of phosphoenolpyruvate (PEP) to the 5-hydroxyl of shikimate-3-phosphate (S3P) to produce enolpyruvyl shikimate-3-phosphate and inorganic phosphate. The protein is 3-phosphoshikimate 1-carboxyvinyltransferase of Bordetella parapertussis (strain 12822 / ATCC BAA-587 / NCTC 13253).